A 352-amino-acid chain; its full sequence is Photosystem II D2 protein (352 aa).

Residues 40 to 60 (CAYMALGGWLTGTTFVTSWYT) traverse the membrane as a helical segment. Histidine 117 lines the chlorophyll a pocket. A helical membrane pass occupies residues 124-140 (GFMLRQFEIARLVGIRP). Pheophytin a contacts are provided by glutamine 129 and asparagine 142. The chain crosses the membrane as a helical span at residues 152–165 (VFVSVFLMYPLGQS). Histidine 197 lines the chlorophyll a pocket. The helical transmembrane segment at 207 to 227 (GALLCAIHGATVENTLFEDGD) threads the bilayer. The a plastoquinone site is built by histidine 214 and phenylalanine 261. Residue histidine 214 participates in Fe cation binding. Histidine 268 is a Fe cation binding site. The chain crosses the membrane as a helical span at residues 278 to 294 (GLWTSSIGIIGLALNLR).

Belongs to the reaction center PufL/M/PsbA/D family. In terms of assembly, PSII is composed of 1 copy each of membrane proteins PsbA, PsbB, PsbC, PsbD, PsbE, PsbF, PsbH, PsbI, PsbJ, PsbK, PsbL, PsbM, PsbT, PsbX, PsbY, PsbZ, Psb30/Ycf12, peripheral proteins PsbO, CyanoQ (PsbQ), PsbU, PsbV and a large number of cofactors. It forms dimeric complexes. The cofactor is The D1/D2 heterodimer binds P680, chlorophylls that are the primary electron donor of PSII, and subsequent electron acceptors. It shares a non-heme iron and each subunit binds pheophytin, quinone, additional chlorophylls, carotenoids and lipids. There is also a Cl(-1) ion associated with D1 and D2, which is required for oxygen evolution. The PSII complex binds additional chlorophylls, carotenoids and specific lipids..

Its subcellular location is the cellular thylakoid membrane. The enzyme catalyses 2 a plastoquinone + 4 hnu + 2 H2O = 2 a plastoquinol + O2. In terms of biological role, photosystem II (PSII) is a light-driven water:plastoquinone oxidoreductase that uses light energy to abstract electrons from H(2)O, generating O(2) and a proton gradient subsequently used for ATP formation. It consists of a core antenna complex that captures photons, and an electron transfer chain that converts photonic excitation into a charge separation. The D1/D2 (PsbA/PsbD) reaction center heterodimer binds P680, the primary electron donor of PSII as well as several subsequent electron acceptors. D2 is needed for assembly of a stable PSII complex. The chain is Photosystem II D2 protein from Synechococcus sp. (strain RCC307).